A 213-amino-acid chain; its full sequence is High frequency lysogenization protein HflD homolog (213 aa).

A coiled-coil region spans residues 79-126 (QGLNAELTRYTLSLMVLERKLSSAKGALDTLGNRINGLQRQLEHFDLQ).

Belongs to the HflD family.

The protein localises to the cytoplasm. It localises to the cell inner membrane. The protein is High frequency lysogenization protein HflD homolog of Shigella flexneri serotype 5b (strain 8401).